The sequence spans 154 residues: Prefoldin subunit alpha (154 aa).

The segment at 119–154 (EKAEVETEMEELEQQAQQMQQQQMQQMMQQQEQEDE) is disordered. Residues 132-154 (QQAQQMQQQQMQQMMQQQEQEDE) are compositionally biased toward low complexity.

Belongs to the prefoldin subunit alpha family. As to quaternary structure, heterohexamer of two alpha and four beta subunits.

The protein resides in the cytoplasm. In terms of biological role, molecular chaperone capable of stabilizing a range of proteins. Seems to fulfill an ATP-independent, HSP70-like function in archaeal de novo protein folding. In Haloarcula marismortui (strain ATCC 43049 / DSM 3752 / JCM 8966 / VKM B-1809) (Halobacterium marismortui), this protein is Prefoldin subunit alpha.